A 280-amino-acid polypeptide reads, in one-letter code: Pantothenate synthetase (280 aa).

30 to 37 is an ATP binding site; it reads MGYLHEGH. H37 acts as the Proton donor in catalysis. Q61 contacts (R)-pantoate. Q61 lines the beta-alanine pocket. 147–150 is an ATP binding site; sequence GQKD. Q153 provides a ligand contact to (R)-pantoate. Residues V176 and 184–187 contribute to the ATP site; that span reads MSSR.

This sequence belongs to the pantothenate synthetase family. Homodimer.

It localises to the cytoplasm. The enzyme catalyses (R)-pantoate + beta-alanine + ATP = (R)-pantothenate + AMP + diphosphate + H(+). It functions in the pathway cofactor biosynthesis; (R)-pantothenate biosynthesis; (R)-pantothenate from (R)-pantoate and beta-alanine: step 1/1. Its function is as follows. Catalyzes the condensation of pantoate with beta-alanine in an ATP-dependent reaction via a pantoyl-adenylate intermediate. The protein is Pantothenate synthetase of Thermotoga neapolitana.